The primary structure comprises 38 residues: Photosystem II reaction center protein L (38 aa).

The helical transmembrane segment at Ser-17–Phe-37 threads the bilayer.

This sequence belongs to the PsbL family. As to quaternary structure, PSII is composed of 1 copy each of membrane proteins PsbA, PsbB, PsbC, PsbD, PsbE, PsbF, PsbH, PsbI, PsbJ, PsbK, PsbL, PsbM, PsbT, PsbY, PsbZ, Psb30/Ycf12, at least 3 peripheral proteins of the oxygen-evolving complex and a large number of cofactors. It forms dimeric complexes.

Its subcellular location is the plastid. It localises to the chloroplast thylakoid membrane. Its function is as follows. One of the components of the core complex of photosystem II (PSII). PSII is a light-driven water:plastoquinone oxidoreductase that uses light energy to abstract electrons from H(2)O, generating O(2) and a proton gradient subsequently used for ATP formation. It consists of a core antenna complex that captures photons, and an electron transfer chain that converts photonic excitation into a charge separation. This subunit is found at the monomer-monomer interface and is required for correct PSII assembly and/or dimerization. In Cyanidium caldarium (Red alga), this protein is Photosystem II reaction center protein L.